A 154-amino-acid chain; its full sequence is 3-hydroxyacyl-[acyl-carrier-protein] dehydratase FabZ (154 aa).

Residue His-60 is part of the active site.

The protein belongs to the thioester dehydratase family. FabZ subfamily.

It is found in the cytoplasm. It catalyses the reaction a (3R)-hydroxyacyl-[ACP] = a (2E)-enoyl-[ACP] + H2O. Functionally, involved in unsaturated fatty acids biosynthesis. Catalyzes the dehydration of short chain beta-hydroxyacyl-ACPs and long chain saturated and unsaturated beta-hydroxyacyl-ACPs. The sequence is that of 3-hydroxyacyl-[acyl-carrier-protein] dehydratase FabZ from Actinobacillus pleuropneumoniae serotype 5b (strain L20).